Reading from the N-terminus, the 125-residue chain is Small ribosomal subunit protein uS12c (125 aa).

The disordered stretch occupies residues 104 to 125; sequence ASGVKDRKQGRSKYGGKRPKGD. Residues 113-125 show a composition bias toward basic residues; that stretch reads GRSKYGGKRPKGD.

This sequence belongs to the universal ribosomal protein uS12 family. As to quaternary structure, part of the 30S ribosomal subunit.

The protein resides in the plastid. It is found in the chloroplast. With S4 and S5 plays an important role in translational accuracy. Located at the interface of the 30S and 50S subunits. This Emiliania huxleyi (Coccolithophore) protein is Small ribosomal subunit protein uS12c (rps12).